The following is a 163-amino-acid chain: Transcription elongation factor GreA (163 aa).

Residues 45-65 (NAEYHAAREKQAFIEARINEL) adopt a coiled-coil conformation.

Belongs to the GreA/GreB family.

Necessary for efficient RNA polymerase transcription elongation past template-encoded arresting sites. The arresting sites in DNA have the property of trapping a certain fraction of elongating RNA polymerases that pass through, resulting in locked ternary complexes. Cleavage of the nascent transcript by cleavage factors such as GreA or GreB allows the resumption of elongation from the new 3'terminus. GreA releases sequences of 2 to 3 nucleotides. The polypeptide is Transcription elongation factor GreA (Helicobacter hepaticus (strain ATCC 51449 / 3B1)).